Reading from the N-terminus, the 227-residue chain is Cytochrome c oxidase subunit 2 (227 aa).

Over 1-14 (MAYPVQLGFQDAAS) the chain is Mitochondrial intermembrane. Residues 15-45 (PIMEELLYFHDHTLMIMFLISSLVLYIISLM) traverse the membrane as a helical segment. Residues 46–59 (LTTELMHTNTMDAQ) lie on the Mitochondrial matrix side of the membrane. Residues 60–87 (EVETVWTILPAAILILIALPSLRILYMM) form a helical membrane-spanning segment. Topologically, residues 88–227 (DEITTPSLTL…HFEEWLLSML (140 aa)) are mitochondrial intermembrane. The Cu cation site is built by histidine 161, cysteine 196, glutamate 198, cysteine 200, histidine 204, and methionine 207. Glutamate 198 provides a ligand contact to Mg(2+).

Belongs to the cytochrome c oxidase subunit 2 family. As to quaternary structure, component of the cytochrome c oxidase (complex IV, CIV), a multisubunit enzyme composed of 14 subunits. The complex is composed of a catalytic core of 3 subunits MT-CO1, MT-CO2 and MT-CO3, encoded in the mitochondrial DNA, and 11 supernumerary subunits COX4I, COX5A, COX5B, COX6A, COX6B, COX6C, COX7A, COX7B, COX7C, COX8 and NDUFA4, which are encoded in the nuclear genome. The complex exists as a monomer or a dimer and forms supercomplexes (SCs) in the inner mitochondrial membrane with NADH-ubiquinone oxidoreductase (complex I, CI) and ubiquinol-cytochrome c oxidoreductase (cytochrome b-c1 complex, complex III, CIII), resulting in different assemblies (supercomplex SCI(1)III(2)IV(1) and megacomplex MCI(2)III(2)IV(2)). Found in a complex with TMEM177, COA6, COX18, COX20, SCO1 and SCO2. Interacts with TMEM177 in a COX20-dependent manner. Interacts with COX20. Interacts with COX16. The cofactor is Cu cation.

It localises to the mitochondrion inner membrane. The enzyme catalyses 4 Fe(II)-[cytochrome c] + O2 + 8 H(+)(in) = 4 Fe(III)-[cytochrome c] + 2 H2O + 4 H(+)(out). In terms of biological role, component of the cytochrome c oxidase, the last enzyme in the mitochondrial electron transport chain which drives oxidative phosphorylation. The respiratory chain contains 3 multisubunit complexes succinate dehydrogenase (complex II, CII), ubiquinol-cytochrome c oxidoreductase (cytochrome b-c1 complex, complex III, CIII) and cytochrome c oxidase (complex IV, CIV), that cooperate to transfer electrons derived from NADH and succinate to molecular oxygen, creating an electrochemical gradient over the inner membrane that drives transmembrane transport and the ATP synthase. Cytochrome c oxidase is the component of the respiratory chain that catalyzes the reduction of oxygen to water. Electrons originating from reduced cytochrome c in the intermembrane space (IMS) are transferred via the dinuclear copper A center (CU(A)) of subunit 2 and heme A of subunit 1 to the active site in subunit 1, a binuclear center (BNC) formed by heme A3 and copper B (CU(B)). The BNC reduces molecular oxygen to 2 water molecules using 4 electrons from cytochrome c in the IMS and 4 protons from the mitochondrial matrix. This is Cytochrome c oxidase subunit 2 (MT-CO2) from Hapalemur griseus (Gray gentle lemur).